An 80-amino-acid polypeptide reads, in one-letter code: MAIFKSISNSTGSMGSSIGFSSKDGFSSNDNSISCFDGGGGGGGLGGWGGIGGFNVGCGGSNANIINIDIDIGRRHRRCC.

The protein belongs to the UPF0512 family.

This Dictyostelium discoideum (Social amoeba) protein is UPF0512 protein J.